A 489-amino-acid polypeptide reads, in one-letter code: 3-octaprenyl-4-hydroxybenzoate carboxy-lyase (489 aa).

Asn-172 lines the Mn(2+) pocket. Residues 175–177, 189–191, and 194–195 each bind prenylated FMN; these read IYR, RWL, and RG. Glu-238 lines the Mn(2+) pocket. Asp-287 serves as the catalytic Proton donor.

The protein belongs to the UbiD family. As to quaternary structure, homohexamer. It depends on prenylated FMN as a cofactor. Mn(2+) is required as a cofactor.

It localises to the cell membrane. It carries out the reaction a 4-hydroxy-3-(all-trans-polyprenyl)benzoate + H(+) = a 2-(all-trans-polyprenyl)phenol + CO2. It functions in the pathway cofactor biosynthesis; ubiquinone biosynthesis. Its function is as follows. Catalyzes the decarboxylation of 3-octaprenyl-4-hydroxy benzoate to 2-octaprenylphenol, an intermediate step in ubiquinone biosynthesis. In Klebsiella pneumoniae (strain 342), this protein is 3-octaprenyl-4-hydroxybenzoate carboxy-lyase.